The primary structure comprises 541 residues: GPI alpha-1,2-mannosyltransferase 3 (541 aa).

N-linked (GlcNAc...) asparagine glycosylation occurs at N18. Helical transmembrane passes span 53-73 (LVLF…TSFV), 126-146 (VHLL…IADL), 182-202 (LTNT…PLEG), 214-234 (LVAL…PLLF), 245-265 (DLIL…SLII), 305-325 (GFPA…FLAP), 330-350 (IFLV…HKEF), 352-372 (FIYP…NNLK), and 377-397 (PALS…GLVH). N417 is a glycosylation site (N-linked (GlcNAc...) asparagine).

Belongs to the glycosyltransferase 22 family. PIGB subfamily.

The protein localises to the endoplasmic reticulum membrane. The protein operates within glycolipid biosynthesis; glycosylphosphatidylinositol-anchor biosynthesis. Its function is as follows. Alpha-1,2-mannosyltransferase that catalyzes the transfer of the third mannose, via an alpha-1,2 bond, from a dolichol-phosphate-mannose (Dol-P-Man) to an alpha-D-Man-(1-&gt;6)-2-PEtn-alpha-D-Man-(1-&gt;4)-alpha-D-GlcN-(1-&gt;6)-(1-radyl,2-acyl-sn-glycero-3-phospho)-2-acyl-inositol intermediate to generate an alpha-D-Man-(1-&gt;2)-alpha-D-Man-(1-&gt;6)-2-PEtn-alpha-D-Man-(1-&gt;4)-alpha-D-GlcN-(1-&gt;6)-(1-radyl,2-acyl-sn-glycero-3-phospho)-2-acyl-inositol (also termed H6) and participates in the nineth step of the glycosylphosphatidylinositol-anchor biosynthesis. May also add the third mannose to an alpha-D-Man-(1-&gt;6)-alpha-D-Man-(1-&gt;4)-alpha-D-GlcN-(1-&gt;6)-(1-radyl,2-acyl-sn-glycero-3-phospho)-2-acyl-inositol (also termed H3) intermediate generating an alpha-D-Man-(1-&gt;2)-alpha-D-Man-(1-&gt;6)-alpha-D-Man-(1-&gt;4)-alpha-D-GlcN-(1-&gt;6)-(1-radyl,2-acyl-sn-glycero-3-phospho)-2-acyl-inositol (also termed H4). This is GPI alpha-1,2-mannosyltransferase 3 from Bos taurus (Bovine).